Reading from the N-terminus, the 1200-residue chain is SSHNPGQSFTTGTTTTVVYTATDAFANVGQCAFTITVTATDTTPPVVTVSSSTITRQVEVGTPGVNVFFTEPTATDNSGQAILISRTNQPGDFFSVGQTIVTYTFQDPSGNPASGTVTINVIEVDTTPPVVTVPSTTITRQVEVGSSGVNVFYTEPTATDNSGQAILTSRTNQPGDFFPVGQTTVTYTFQDPSGNPASGTVTINVIEVDTTPPVVTVPSTTITRQVEVGSSGVNVFYTEPTATDNSGQAILTSRTNQPGDFFPVGQTTVTYTFSQDPSGNPASATVTINVIEVDTTPPVVTVPSTTITRQVEIGTPGVNVFYTEPTATDNSGIANLVSRTNQPGDFFPVGQTDVTYTFQDPSGNPSSGTVTINVVEVDTTSPVITVPSNTITREVELGTPGVNVFYTEPTATDNSGIANLVSRTNQPGDFFNVGQTVVTYTFQDPSGNPASGTVTINVVEVDTTPPQVFVTTGEVVRTAPFGSSGVNVFFTEPVAIDNSGTADLVSQTAQPGDFFPIGSTVVTYRYRDASGNEATGTFTVTVEEMVDTTPPTVTVSGGNIVRTVELGQSRLSVIYTEPTATDNSGEANLVSRTAQPGDLFPVGTTTVEYVYQDPAGNEGRGQFTVTVIAVDTTPPSVNCPNNVFQEVELGTSSAPVFFTEPTAFDISGQANLVTRTAAPGDSFPVGTTSVSYIFSDNSGNEAEPCTFTVTISAVDTTPPTVNCINNVAQTVQLGTGSTQVFFTEPTAFDISGQTSLVTRTSAPGDSFPVGTTSVTYIFTDASGNNAQPCTFNVVINAVDTTPPTVNCANNIAQTIELGSTSAVVNYAEPSATDISGTAFLVSRSSSPGDSFPIGSTTVTYIFSDQSGNEAPPCVFTVTIGTVDTMMPMFTSCPNNIVQSVELGVPGTVISWTTPTANDAAGIASIVSNLQPGSFFTVGESATVTYVATDNSGLTDNSCSFTVTVFAVDTTPPSVVCTNNVFQTVELGTNPVQVFYTEPTASDISGQANLVSRTNVPGDSFPVGTSTVTYVFADNSGNTADACSFTITVTAQDTTPPTVNCITNIVRTVELGTSSVQVFYNEPTASDLGQASLVSRTAQPGDNFPVGVNPVTYVFGDNSGNQADPCTFTITVNTQDTTPPTVTCISDITRVVELGTTSVGISYTEPTATDISGTATLDSRSHTPGQNFPVGSTVVSYFFSD.

HYR domains lie at 1–39, 40–123, 124–207, 208–292, 293–376, 377–460, 461–544, 546–629, 630–713, 714–797, 798–881, 882–966, 967–1050, 1051–1133, and 1134–1200; these read SSHN…TVTA, TDTT…NVIE, VDTT…NVIE, VDTT…NVVE, VDTT…TVEE, VDTT…TVIA, VDTT…TISA, VDTT…VINA, VDTT…TIGT, VDTM…TVFA, VDTT…TVTA, QDTT…TVNT, and QDTT…FFSD.

As to quaternary structure, homooligomer in presence of calcium. In terms of processing, glycosylated.

The protein resides in the secreted. The protein localises to the extracellular space. It is found in the extracellular matrix. In terms of biological role, major constituent of the hyaline layer. The hyaline layer of echinoderm embryos is an extraembryonic matrix that functions as a substrate for cell adhesion through early development. This Strongylocentrotus purpuratus (Purple sea urchin) protein is Hyalin.